An 80-amino-acid chain; its full sequence is Cytochrome c oxidase subunit 7B, mitochondrial (80 aa).

Residues 1-24 (MLPLAKNALSRLQVRSIQQVVARQ) constitute a mitochondrion transit peptide. At 25 to 39 (SHQKRAPSFHDKYGN) the chain is on the mitochondrial matrix side. Residues 40-60 (AILAGGAIFCVSTWTYTATQI) traverse the membrane as a helical segment. Over 61–80 (GIEWNMSPVGRVTPKEWRDQ) the chain is Mitochondrial intermembrane.

Belongs to the cytochrome c oxidase VIIb family. In terms of assembly, component of the cytochrome c oxidase (complex IV, CIV), a multisubunit enzyme composed of 14 subunits. The complex is composed of a catalytic core of 3 subunits MT-CO1, MT-CO2 and MT-CO3, encoded in the mitochondrial DNA, and 11 supernumerary subunits COX4I, COX5A, COX5B, COX6A, COX6B, COX6C, COX7A, COX7B, COX7C, COX8 and NDUFA4, which are encoded in the nuclear genome. The complex exists as a monomer or a dimer and forms supercomplexes (SCs) in the inner mitochondrial membrane with NADH-ubiquinone oxidoreductase (complex I, CI) and ubiquinol-cytochrome c oxidoreductase (cytochrome b-c1 complex, complex III, CIII), resulting in different assemblies (supercomplex SCI(1)III(2)IV(1) and megacomplex MCI(2)III(2)IV(2)).

Its subcellular location is the mitochondrion inner membrane. It participates in energy metabolism; oxidative phosphorylation. In terms of biological role, component of the cytochrome c oxidase, the last enzyme in the mitochondrial electron transport chain which drives oxidative phosphorylation. The respiratory chain contains 3 multisubunit complexes succinate dehydrogenase (complex II, CII), ubiquinol-cytochrome c oxidoreductase (cytochrome b-c1 complex, complex III, CIII) and cytochrome c oxidase (complex IV, CIV), that cooperate to transfer electrons derived from NADH and succinate to molecular oxygen, creating an electrochemical gradient over the inner membrane that drives transmembrane transport and the ATP synthase. Cytochrome c oxidase is the component of the respiratory chain that catalyzes the reduction of oxygen to water. Electrons originating from reduced cytochrome c in the intermembrane space (IMS) are transferred via the dinuclear copper A center (CU(A)) of subunit 2 and heme A of subunit 1 to the active site in subunit 1, a binuclear center (BNC) formed by heme A3 and copper B (CU(B)). The BNC reduces molecular oxygen to 2 water molecules using 4 electrons from cytochrome c in the IMS and 4 protons from the mitochondrial matrix. Plays a role in proper central nervous system (CNS) development in vertebrates. The protein is Cytochrome c oxidase subunit 7B, mitochondrial (Cox7b) of Mus musculus (Mouse).